We begin with the raw amino-acid sequence, 371 residues long: Deoxyhypusine synthase (371 aa).

NAD(+) is bound by residues 107–111 (SNLIS), 133–135 (TTG), E139, and D240. 138–139 (EE) contacts spermidine. Residue D245 coordinates spermidine. Residue G287 coordinates NAD(+). A spermidine-binding site is contributed by H292. 312 to 313 (TA) contacts NAD(+). Residues 318-320 (GSD) and 327-333 (EAVSWGK) each bind spermidine. The active-site Nucleophile is K333. Residue 346–347 (DA) participates in NAD(+) binding.

Belongs to the deoxyhypusine synthase family. It depends on NAD(+) as a cofactor. Expressed in shoot tips.

The enzyme catalyses [eIF5A protein]-L-lysine + spermidine = [eIF5A protein]-deoxyhypusine + propane-1,3-diamine. It functions in the pathway protein modification; eIF5A hypusination. Catalyzes the NAD-dependent oxidative cleavage of spermidine and the subsequent transfer of the butylamine moiety of spermidine to the epsilon-amino group of a specific lysine residue of the eIF-5A precursor protein to form the intermediate deoxyhypusine residue. Also able to produce homospermidine from putrescine. The chain is Deoxyhypusine synthase (DHS1) from Senecio vernalis (Spring groundsel).